Reading from the N-terminus, the 229-residue chain is MFFTMTTPHTIAIDGPAASGKSTLGKLLADHFGYIYFDTGVLYRALTYVALEQAVDLADAAALAKLAQTSNFEVLPPTIADGRQYTVLANGEDITWPLRAANVERNVSQVAAQSAVREALRDIQRQIGKAGHVVMAGRDIGAVILPDAQLKIYLDASVEERAQRRAQELNARGRSISYREVLDDLTRRDAKDAANTFLAADAITITTDGRSPEEVFQAILGLIGVEAQA.

15 to 23 (GPAASGKST) contacts ATP.

The protein belongs to the cytidylate kinase family. Type 1 subfamily.

It is found in the cytoplasm. It carries out the reaction CMP + ATP = CDP + ADP. It catalyses the reaction dCMP + ATP = dCDP + ADP. The protein is Cytidylate kinase of Herpetosiphon aurantiacus (strain ATCC 23779 / DSM 785 / 114-95).